Consider the following 154-residue polypeptide: Myoglobin (154 aa).

The 147-residue stretch at 2 to 148 (GLSDGEWQLV…FRKDMASNYK (147 aa)) folds into the Globin domain. Ser4 is modified (phosphoserine). His65 contributes to the nitrite binding site. His65 serves as a coordination point for O2. Thr68 carries the post-translational modification Phosphothreonine. Residue His94 participates in heme b binding.

It belongs to the globin family. As to quaternary structure, monomeric.

It localises to the cytoplasm. Its subcellular location is the sarcoplasm. It catalyses the reaction Fe(III)-heme b-[protein] + nitric oxide + H2O = Fe(II)-heme b-[protein] + nitrite + 2 H(+). The catalysed reaction is H2O2 + AH2 = A + 2 H2O. Monomeric heme protein which primary function is to store oxygen and facilitate its diffusion within muscle tissues. Reversibly binds oxygen through a pentacoordinated heme iron and enables its timely and efficient release as needed during periods of heightened demand. Depending on the oxidative conditions of tissues and cells, and in addition to its ability to bind oxygen, it also has a nitrite reductase activity whereby it regulates the production of bioactive nitric oxide. Under stress conditions, like hypoxia and anoxia, it also protects cells against reactive oxygen species thanks to its pseudoperoxidase activity. This chain is Myoglobin (MB), found in Hylobates agilis (Agile gibbon).